Reading from the N-terminus, the 359-residue chain is tRNA-specific 2-thiouridylase MnmA (359 aa).

ATP contacts are provided by residues 9 to 16 (GLSGGVDS) and Met35. An interaction with target base in tRNA region spans residues 95–97 (NPD). The Nucleophile role is filled by Cys100. Cys100 and Cys197 are oxidised to a cystine. Residue Gly124 participates in ATP binding. The interaction with tRNA stretch occupies residues 147–149 (KDQ). Cys197 serves as the catalytic Cysteine persulfide intermediate. The interval 309-310 (RY) is interaction with tRNA.

The protein belongs to the MnmA/TRMU family.

It is found in the cytoplasm. The catalysed reaction is S-sulfanyl-L-cysteinyl-[protein] + uridine(34) in tRNA + AH2 + ATP = 2-thiouridine(34) in tRNA + L-cysteinyl-[protein] + A + AMP + diphosphate + H(+). Catalyzes the 2-thiolation of uridine at the wobble position (U34) of tRNA, leading to the formation of s(2)U34. This chain is tRNA-specific 2-thiouridylase MnmA, found in Cupriavidus metallidurans (strain ATCC 43123 / DSM 2839 / NBRC 102507 / CH34) (Ralstonia metallidurans).